The sequence spans 254 residues: 5-oxoprolinase subunit A (254 aa).

Belongs to the LamB/PxpA family. Forms a complex composed of PxpA, PxpB and PxpC.

The catalysed reaction is 5-oxo-L-proline + ATP + 2 H2O = L-glutamate + ADP + phosphate + H(+). In terms of biological role, catalyzes the cleavage of 5-oxoproline to form L-glutamate coupled to the hydrolysis of ATP to ADP and inorganic phosphate. The chain is 5-oxoprolinase subunit A from Acinetobacter baumannii (strain ATCC 17978 / DSM 105126 / CIP 53.77 / LMG 1025 / NCDC KC755 / 5377).